We begin with the raw amino-acid sequence, 383 residues long: Cytochrome b (383 aa).

Transmembrane regions (helical) follow at residues 35 to 55 (FGSI…ILSM), 79 to 100 (WLFR…YIHI), 115 to 135 (WGIG…GYVL), and 180 to 200 (FFSL…LHLF). Heme b contacts are provided by His85 and His99. His184 and His198 together coordinate heme b. His203 lines the a ubiquinone pocket. The next 4 membrane-spanning stretches (helical) occupy residues 228–248 (IKDL…NFQF), 290–310 (LGGV…IFYN), 321–341 (LNKI…WLGK), and 348–368 (FTNI…LNFY).

It belongs to the cytochrome b family. The main subunits of complex b-c1 are: cytochrome b, cytochrome c1 and the Rieske protein. Heme b is required as a cofactor.

It is found in the mitochondrion inner membrane. Its function is as follows. Component of the ubiquinol-cytochrome c reductase complex (complex III or cytochrome b-c1 complex) that is part of the mitochondrial respiratory chain. The b-c1 complex mediates electron transfer from ubiquinol to cytochrome c. Contributes to the generation of a proton gradient across the mitochondrial membrane that is then used for ATP synthesis. The sequence is that of Cytochrome b (MT-CYB) from Apis mellifera ligustica (Common honeybee).